A 306-amino-acid chain; its full sequence is Lipoyl synthase (306 aa).

[4Fe-4S] cluster is bound by residues C55, C60, C66, C81, C85, C88, and S294. The Radical SAM core domain maps to 67 to 283 (WNHRTATFLL…RAYALARGFR (217 aa)).

It belongs to the radical SAM superfamily. Lipoyl synthase family. It depends on [4Fe-4S] cluster as a cofactor.

The protein localises to the cytoplasm. It catalyses the reaction [[Fe-S] cluster scaffold protein carrying a second [4Fe-4S](2+) cluster] + N(6)-octanoyl-L-lysyl-[protein] + 2 oxidized [2Fe-2S]-[ferredoxin] + 2 S-adenosyl-L-methionine + 4 H(+) = [[Fe-S] cluster scaffold protein] + N(6)-[(R)-dihydrolipoyl]-L-lysyl-[protein] + 4 Fe(3+) + 2 hydrogen sulfide + 2 5'-deoxyadenosine + 2 L-methionine + 2 reduced [2Fe-2S]-[ferredoxin]. It participates in protein modification; protein lipoylation via endogenous pathway; protein N(6)-(lipoyl)lysine from octanoyl-[acyl-carrier-protein]: step 2/2. In terms of biological role, catalyzes the radical-mediated insertion of two sulfur atoms into the C-6 and C-8 positions of the octanoyl moiety bound to the lipoyl domains of lipoate-dependent enzymes, thereby converting the octanoylated domains into lipoylated derivatives. This chain is Lipoyl synthase, found in Chloroflexus aggregans (strain MD-66 / DSM 9485).